We begin with the raw amino-acid sequence, 122 residues long: Histone H2B.2 (122 aa).

Over residues 1–10 (MAPKKAPAAT) the composition is skewed to low complexity. Residues 1-28 (MAPKKAPAATTEKKVKKAPTTEKKNKKK) are disordered. Ala2 is subject to N,N,N-trimethylalanine. An N6-acetyllysine mark is found at Lys5 and Lys42. Lys116 participates in a covalent cross-link: Glycyl lysine isopeptide (Lys-Gly) (interchain with G-Cter in ubiquitin).

Belongs to the histone H2B family. The nucleosome is a histone octamer containing two molecules each of H2A, H2B, H3 and H4 assembled in one H3-H4 heterotetramer and two H2A-H2B heterodimers. The octamer wraps approximately 147 bp of DNA. Acetylation occurs almost exclusively in the MAC. Post-translationally, monoubiquitination to form H2BK115ub1 gives a specific tag for epigenetic transcriptional activation and is also prerequisite for H3K4me and H3K79me formation.

It is found in the nucleus. The protein localises to the chromosome. In terms of biological role, core component of nucleosome. Nucleosomes wrap and compact DNA into chromatin, limiting DNA accessibility to the cellular machineries which require DNA as a template. Histones thereby play a central role in transcription regulation, DNA repair, DNA replication and chromosomal stability. DNA accessibility is regulated via a complex set of post-translational modifications of histones, also called histone code, and nucleosome remodeling. This Tetrahymena thermophila (strain SB210) protein is Histone H2B.2 (HTB2).